The following is a 426-amino-acid chain: Glucose-6-phosphate isomerase (426 aa).

Glu-282 (proton donor) is an active-site residue. Catalysis depends on residues His-303 and Lys-417.

Belongs to the GPI family.

Its subcellular location is the cytoplasm. It catalyses the reaction alpha-D-glucose 6-phosphate = beta-D-fructose 6-phosphate. Its pathway is carbohydrate biosynthesis; gluconeogenesis. The protein operates within carbohydrate degradation; glycolysis; D-glyceraldehyde 3-phosphate and glycerone phosphate from D-glucose: step 2/4. Its function is as follows. Catalyzes the reversible isomerization of glucose-6-phosphate to fructose-6-phosphate. This Aster yellows witches'-broom phytoplasma (strain AYWB) protein is Glucose-6-phosphate isomerase.